Consider the following 231-residue polypeptide: tRNA (guanine-N(1)-)-methyltransferase (231 aa).

Residues G112 and 132–137 (LGDFVL) contribute to the S-adenosyl-L-methionine site.

The protein belongs to the RNA methyltransferase TrmD family. Homodimer.

The protein resides in the cytoplasm. The enzyme catalyses guanosine(37) in tRNA + S-adenosyl-L-methionine = N(1)-methylguanosine(37) in tRNA + S-adenosyl-L-homocysteine + H(+). In terms of biological role, specifically methylates guanosine-37 in various tRNAs. This Gloeothece citriformis (strain PCC 7424) (Cyanothece sp. (strain PCC 7424)) protein is tRNA (guanine-N(1)-)-methyltransferase.